Reading from the N-terminus, the 357-residue chain is GDSL esterase/lipase At5g45950 (357 aa).

The signal sequence occupies residues 1 to 23; it reads MLLVAFVTLLVAVALQPLPSVLS. Residue Asn-37 is glycosylated (N-linked (GlcNAc...) asparagine). The Nucleophile role is filled by Ser-47. A glycan (N-linked (GlcNAc...) asparagine) is linked at Asn-132. Residues Asp-331 and His-334 contribute to the active site.

Belongs to the 'GDSL' lipolytic enzyme family.

Its subcellular location is the secreted. The protein is GDSL esterase/lipase At5g45950 of Arabidopsis thaliana (Mouse-ear cress).